The sequence spans 231 residues: PX domain-containing protein 1 (231 aa).

One can recognise a PX domain in the interval 1-134; the sequence is MASAVFEGTS…TFFERSPLDQ (134 aa).

In Homo sapiens (Human), this protein is PX domain-containing protein 1 (PXDC1).